A 122-amino-acid polypeptide reads, in one-letter code: Acidic phospholipase A2 CbIalpha (122 aa).

7 disulfides stabilise this stretch: Cys-26–Cys-115, Cys-28–Cys-44, Cys-43–Cys-95, Cys-49–Cys-122, Cys-50–Cys-88, Cys-57–Cys-81, and Cys-75–Cys-86. Ca(2+) contacts are provided by Tyr-27, Gly-29, and Gly-31. His-47 is a catalytic residue. Asp-48 contributes to the Ca(2+) binding site. Asp-89 is an active-site residue.

It belongs to the phospholipase A2 family. Group II subfamily. D49 sub-subfamily. As to quaternary structure, heterodimer of an acidic subunit (CbIalpha or CbIbeta) and a basic subunit (CbII). The acidic subunit is non-toxic, and increases the toxicity of the basic subunit. Requires Ca(2+) as cofactor. Expressed by the venom gland.

It localises to the secreted. The catalysed reaction is a 1,2-diacyl-sn-glycero-3-phosphocholine + H2O = a 1-acyl-sn-glycero-3-phosphocholine + a fatty acid + H(+). Heterodimer: presynaptic neurotoxin. In terms of biological role, monomer: Snake venom phospholipase A2 (PLA2) is inactive towards micellar phosphatidylcholine but is weakly active towards non-micellar dithiolecithin. PLA2 catalyzes the calcium-dependent hydrolysis of the 2-acyl groups in 3-sn-phosphoglycerides. This Pseudocerastes fieldi (Field's horned viper) protein is Acidic phospholipase A2 CbIalpha.